A 106-amino-acid polypeptide reads, in one-letter code: uncharacterized protein (106 aa).

The next 4 membrane-spanning stretches (helical) occupy residues 3–23 (WFLL…MKYI), 29–49 (KWPI…LSQA), 50–70 (MIVL…SIGV), and 82–102 (FQLS…GLRL).

This sequence belongs to the drug/metabolite transporter (DMT) superfamily. Small multidrug resistance (SMR) (TC 2.A.7.1) family.

The protein resides in the cell membrane. This is an uncharacterized protein from Bacillus subtilis (strain 168).